Consider the following 167-residue polypeptide: Putative ripening-related protein 6 (167 aa).

The first 23 residues, Met1–Ala23, serve as a signal peptide directing secretion. The segment at Lys28–Glu57 is disordered.

The protein belongs to the kiwellin family.

It localises to the secreted. The protein is Putative ripening-related protein 6 of Oryza sativa subsp. japonica (Rice).